We begin with the raw amino-acid sequence, 163 residues long: 6,7-dimethyl-8-ribityllumazine synthase (163 aa).

5-amino-6-(D-ribitylamino)uracil-binding positions include phenylalanine 27, 58–60 (ALE), and 87–89 (CVV). 92–93 (DT) is a binding site for (2S)-2-hydroxy-3-oxobutyl phosphate. Histidine 95 (proton donor) is an active-site residue. A 5-amino-6-(D-ribitylamino)uracil-binding site is contributed by asparagine 120. Arginine 134 lines the (2S)-2-hydroxy-3-oxobutyl phosphate pocket.

The protein belongs to the DMRL synthase family.

The enzyme catalyses (2S)-2-hydroxy-3-oxobutyl phosphate + 5-amino-6-(D-ribitylamino)uracil = 6,7-dimethyl-8-(1-D-ribityl)lumazine + phosphate + 2 H2O + H(+). The protein operates within cofactor biosynthesis; riboflavin biosynthesis; riboflavin from 2-hydroxy-3-oxobutyl phosphate and 5-amino-6-(D-ribitylamino)uracil: step 1/2. In terms of biological role, catalyzes the formation of 6,7-dimethyl-8-ribityllumazine by condensation of 5-amino-6-(D-ribitylamino)uracil with 3,4-dihydroxy-2-butanone 4-phosphate. This is the penultimate step in the biosynthesis of riboflavin. The sequence is that of 6,7-dimethyl-8-ribityllumazine synthase from Nitrobacter winogradskyi (strain ATCC 25391 / DSM 10237 / CIP 104748 / NCIMB 11846 / Nb-255).